The following is a 270-amino-acid chain: Regulatory protein RecX (270 aa).

The protein belongs to the RecX family.

Its subcellular location is the cytoplasm. In terms of biological role, modulates RecA activity. This is Regulatory protein RecX from Bacillus cereus (strain 03BB102).